Reading from the N-terminus, the 193-residue chain is Putative histone H2B type 2-C (193 aa).

Residues 1–12 (MPEPAKFAPAPK) are compositionally biased toward low complexity. A disordered region spans residues 1–33 (MPEPAKFAPAPKKGSKKAVTKAQKKDGKKRKRS). Pro2 carries the post-translational modification N-acetylproline. An N6-(2-hydroxyisobutyryl)lysine; alternate modification is found at Lys6. An N6-(beta-hydroxybutyryl)lysine; alternate mark is found at Lys6 and Lys12. Residues Lys6, Lys12, and Lys13 each carry the N6-acetyllysine; alternate modification. Residue Lys6 is modified to N6-butyryllysine; alternate. 3 positions are modified to N6-crotonyllysine; alternate: Lys6, Lys12, and Lys13. N6-lactoyllysine; alternate is present on residues Lys6 and Lys12. Residue Lys6 forms a Glycyl lysine isopeptide (Lys-Gly) (interchain with G-Cter in SUMO2); alternate linkage. Position 13 is an N6-(2-hydroxyisobutyryl)lysine; alternate (Lys13). At Ser15 the chain carries Phosphoserine; by STK4/MST1. N6-acetyllysine; alternate occurs at positions 16, 17, 21, and 24. Residues Lys16, Lys17, Lys21, and Lys24 each carry the N6-crotonyllysine; alternate modification. 4 positions are modified to N6-lactoyllysine; alternate: Lys16, Lys17, Lys21, and Lys24. Residues Lys17 and Lys21 each carry the N6-(beta-hydroxybutyryl)lysine; alternate modification. At Lys17 the chain carries N6-glutaryllysine; alternate. 2 positions are modified to N6-(2-hydroxyisobutyryl)lysine; alternate: Lys21 and Lys24. Residue Lys21 is modified to N6-butyryllysine; alternate. A Glycyl lysine isopeptide (Lys-Gly) (interchain with G-Cter in SUMO2); alternate cross-link involves residue Lys21. An N6-(2-hydroxyisobutyryl)lysine modification is found at Lys25. Lys35 carries the N6-(2-hydroxyisobutyryl)lysine; alternate modification. Lys35 carries the N6-(beta-hydroxybutyryl)lysine; alternate modification. Lys35 carries the N6-crotonyllysine; alternate modification. N6-glutaryllysine; alternate is present on Lys35. Lys35 is modified (N6-succinyllysine; alternate). Lys35 participates in a covalent cross-link: Glycyl lysine isopeptide (Lys-Gly) (interchain with G-Cter in ubiquitin); alternate. At Ser37 the chain carries Phosphoserine; by AMPK. N6-(2-hydroxyisobutyryl)lysine; alternate is present on residues Lys44, Lys47, and Lys58. Lys44 is subject to N6-lactoyllysine; alternate. N6-glutaryllysine; alternate occurs at positions 44 and 47. Residue Lys47 is modified to N6-methyllysine; alternate. The residue at position 58 (Lys58) is an N6,N6-dimethyllysine; alternate. Residue Arg80 is modified to Dimethylated arginine. The residue at position 86 (Lys86) is an N6-(2-hydroxyisobutyryl)lysine; alternate. Lys86 carries the post-translational modification N6-(beta-hydroxybutyryl)lysine; alternate. Lys86 carries the post-translational modification N6-acetyllysine; alternate. Lys86 carries the post-translational modification N6-lactoyllysine; alternate. Lys86 is modified (N6,N6,N6-trimethyllysine; alternate). Omega-N-methylarginine occurs at positions 87 and 93. The segment at 111 to 136 (PCPRAPRRSPSTPAPSESLPGPGARS) is disordered.

This sequence belongs to the histone H2B family. The nucleosome is a histone octamer containing two molecules each of H2A, H2B, H3 and H4 assembled in one H3-H4 heterotetramer and two H2A-H2B heterodimers. The octamer wraps approximately 147 bp of DNA. Phosphorylation at Ser-37 (H2BS36ph) by AMPK in response to stress promotes transcription. Phosphorylated on Ser-15 (H2BS14ph) by STK4/MST1 during apoptosis; which facilitates apoptotic chromatin condensation. Also phosphorylated on Ser-15 in response to DNA double strand breaks (DSBs), and in correlation with somatic hypermutation and immunoglobulin class-switch recombination. In terms of processing, crotonylation (Kcr) is specifically present in male germ cells and marks testis-specific genes in post-meiotic cells, including X-linked genes that escape sex chromosome inactivation in haploid cells. Crotonylation marks active promoters and enhancers and confers resistance to transcriptional repressors. It is also associated with post-meiotically activated genes on autosomes. Post-translationally, lactylated in macrophages by EP300/P300 by using lactoyl-CoA directly derived from endogenous or exogenous lactate, leading to stimulates gene transcription.

It localises to the nucleus. The protein localises to the chromosome. In terms of biological role, core component of nucleosome. Nucleosomes wrap and compact DNA into chromatin, limiting DNA accessibility to the cellular machineries which require DNA as a template. Histones thereby play a central role in transcription regulation, DNA repair, DNA replication and chromosomal stability. DNA accessibility is regulated via a complex set of post-translational modifications of histones, also called histone code, and nucleosome remodeling. The polypeptide is Putative histone H2B type 2-C (Homo sapiens (Human)).